The sequence spans 281 residues: NADPH-dependent 7-cyano-7-deazaguanine reductase (281 aa).

87 to 89 serves as a coordination point for substrate; the sequence is IES. 89–90 is an NADPH binding site; it reads SK. Residue Cys-188 is the Thioimide intermediate of the active site. Asp-195 (proton donor) is an active-site residue. 227 to 228 is a binding site for substrate; it reads HE. An NADPH-binding site is contributed by 256–257; the sequence is RG. The interval 261-281 is disordered; sequence INPYRSTEQDKPAHNHRMARQ.

This sequence belongs to the GTP cyclohydrolase I family. QueF type 2 subfamily. Homodimer.

The protein localises to the cytoplasm. The enzyme catalyses 7-aminomethyl-7-carbaguanine + 2 NADP(+) = 7-cyano-7-deazaguanine + 2 NADPH + 3 H(+). Its pathway is tRNA modification; tRNA-queuosine biosynthesis. In terms of biological role, catalyzes the NADPH-dependent reduction of 7-cyano-7-deazaguanine (preQ0) to 7-aminomethyl-7-deazaguanine (preQ1). This Vibrio parahaemolyticus serotype O3:K6 (strain RIMD 2210633) protein is NADPH-dependent 7-cyano-7-deazaguanine reductase.